Here is a 135-residue protein sequence, read N- to C-terminus: ATP synthase epsilon chain (135 aa).

It belongs to the ATPase epsilon chain family. In terms of assembly, F-type ATPases have 2 components, CF(1) - the catalytic core - and CF(0) - the membrane proton channel. CF(1) has five subunits: alpha(3), beta(3), gamma(1), delta(1), epsilon(1). CF(0) has three main subunits: a, b and c.

It localises to the cell inner membrane. In terms of biological role, produces ATP from ADP in the presence of a proton gradient across the membrane. This chain is ATP synthase epsilon chain, found in Rhizobium rhizogenes (strain K84 / ATCC BAA-868) (Agrobacterium radiobacter).